The sequence spans 344 residues: 2,3,4,5-tetrahydropyridine-2,6-dicarboxylate N-succinyltransferase (344 aa).

A Mg(2+)-binding site is contributed by E205. Residue E221 is the Acyl-anhydride intermediate of the active site. Residues R223, G238, S241, A264, 279 to 280, 287 to 289, K304, and 317 to 320 each bind succinyl-CoA; these read EA, GTK, and RRNS.

Belongs to the type 2 tetrahydrodipicolinate N-succinyltransferase family. In terms of assembly, homotrimer. Requires Magnesium ions are not essential for catalysis. as cofactor.

The protein resides in the cytoplasm. The catalysed reaction is (S)-2,3,4,5-tetrahydrodipicolinate + succinyl-CoA + H2O = (S)-2-succinylamino-6-oxoheptanedioate + CoA. Its pathway is amino-acid biosynthesis; L-lysine biosynthesis via DAP pathway; LL-2,6-diaminopimelate from (S)-tetrahydrodipicolinate (succinylase route): step 1/3. Its activity is regulated as follows. Weakly inhibited by D-2-aminopimelate. Functionally, catalyzes the conversion of the cyclic tetrahydrodipicolinate (THDP) into the acyclic N-succinyl-L-2-amino-6-oxopimelate using succinyl-CoA. Displays succinyl transferase activity with L-2-aminopimelate and succinyl-CoA as substrates. The polypeptide is 2,3,4,5-tetrahydropyridine-2,6-dicarboxylate N-succinyltransferase (Pseudomonas aeruginosa (strain ATCC 15692 / DSM 22644 / CIP 104116 / JCM 14847 / LMG 12228 / 1C / PRS 101 / PAO1)).